A 247-amino-acid polypeptide reads, in one-letter code: V-type proton ATPase subunit D (247 aa).

It belongs to the V-ATPase D subunit family. V-ATPase is a heteromultimeric enzyme made up of two complexes: the ATP-hydrolytic V1 complex and the proton translocation V0 complex. The V1 complex consists of three catalytic AB heterodimers that form a heterohexamer, three peripheral stalks each consisting of EG heterodimers, one central rotor including subunits D and F, and the regulatory subunits C and H. The proton translocation complex V0 consists of the proton transport subunit a, a ring of proteolipid subunits c9c'', rotary subunit d, subunits e and f, and the accessory subunits ATP6AP1/Ac45 and ATP6AP2/PRR. Interacts with SNX10. As to expression, expressed in brain (at protein level). Present in tissues active in secretion. Amounts elevated in brain, kidney and testis.

Its subcellular location is the membrane. It is found in the cytoplasmic vesicle. The protein localises to the clathrin-coated vesicle membrane. It localises to the cytoplasm. The protein resides in the cytoskeleton. Its subcellular location is the microtubule organizing center. It is found in the centrosome. The protein localises to the cell projection. It localises to the cilium. Functionally, subunit of the V1 complex of vacuolar(H+)-ATPase (V-ATPase), a multisubunit enzyme composed of a peripheral complex (V1) that hydrolyzes ATP and a membrane integral complex (V0) that translocates protons. V-ATPase is responsible for acidifying and maintaining the pH of intracellular compartments and in some cell types, is targeted to the plasma membrane, where it is responsible for acidifying the extracellular environment. May play a role in cilium biogenesis through regulation of the transport and the localization of proteins to the cilium. The chain is V-type proton ATPase subunit D (ATP6V1D) from Bos taurus (Bovine).